The primary structure comprises 175 residues: Nudix hydrolase 25 (175 aa).

The Nudix hydrolase domain occupies 7-155 (GYRPNVGVCL…KRPTYEEVIK (149 aa)). Gly40, Glu55, and Glu59 together coordinate Mn(2+). The short motif at 40–61 (GGIEDGEDPKSAAMRELQEETG) is the Nudix box element.

The protein belongs to the Nudix hydrolase family. The cofactor is Mn(2+).

The enzyme catalyses P(1),P(4)-bis(5'-guanosyl) tetraphosphate + H2O = GMP + GTP + 2 H(+). In terms of biological role, mediates the hydrolysis of diadenosine 5',5''-P(1)P(4) tetraphosphate (Ap(4)A), a signaling molecule involved in regulation of DNA replication and repair. In Arabidopsis thaliana (Mouse-ear cress), this protein is Nudix hydrolase 25.